A 578-amino-acid polypeptide reads, in one-letter code: Vitelline membrane-like protein (578 aa).

The N-terminal stretch at 1–21 (MCGRRLLFLAAFGCLLANAFS) is a signal peptide. A 45 X 8 AA approximate tandem repeats of [PS]-[AS]-Y-S-A-P-A-[AS] region spans residues 72–452 (QGYSAPAAPV…AAPSYSAPAS (381 aa)). Disordered stretches follow at residues 133–442 (ASSS…YSAP) and 487–514 (SGSP…ASKS). The VM domain maps to 549–578 (SLPSPPCPKNYVFSCSSVFTPAPCSQGYGY).

As to quaternary structure, interacts with Vm26Aa and Vm26Ab; forms part of a disulfide-linked network within the vitelline membrane of stage 10 egg chambers. Post-translationally, becomes part of a disulfide-linked network including other vitelline membrane proteins, including Vm26Aa and Vm26Ab, during vitelline membrane biogenesis and maturation. In terms of processing, sulfated by pip; probably involved in embryo dorsal-ventral axis determination. Sulfation by pip may occur on covalently bound glycosaminoglycans. Secreted into the perivitelline space and becomes stably incorporated into the vitelline membrane (at protein level). Expressed throughout the follicle cell layer of stage 10 egg chambers.

It is found in the secreted. The protein resides in the extracellular space. It localises to the extracellular matrix. Major early eggshell protein secreted by folicle cells into the perivitelline space and incorporated into the vitelline membrane. Localized sulfation by pip may be involved in embryo dorsal-ventral axis determination. This is Vitelline membrane-like protein from Drosophila melanogaster (Fruit fly).